The sequence spans 341 residues: RDSTTHQSHFRGGVGVTKISFKPHGFRAIRASVMPSEGQQQSSLGDSLVNSPHRNDVVDVIRKSAISNCLSETNLHNTVPGLVSKTRGKVRDIYDAGDYLVLVTTDRQSAFDRILASIPFKGQVLNETSLWWFERTKQIVPNAVVSAPDKNVTIAKKCSVFPVEFVARGFVTGSTDTSLWTVYNKGARNYCGNVLPDGMVKNQKLSENILTPTTKAADHDVPVTPDEIIERGLMTRSDYEEVSEKALSLFEYGQQVASEHGLILVDTKYEFGKANDGSIMLIDEVHTPDSSRYWIASSYPERFQNGLEPENIDKEFLRLWFKSHCNPYEDEVLPDAPEDLL.

Belongs to the SAICAR synthetase family.

The protein resides in the plastid. It localises to the chloroplast. It catalyses the reaction 5-amino-1-(5-phospho-D-ribosyl)imidazole-4-carboxylate + L-aspartate + ATP = (2S)-2-[5-amino-1-(5-phospho-beta-D-ribosyl)imidazole-4-carboxamido]succinate + ADP + phosphate + 2 H(+). Its pathway is purine metabolism; IMP biosynthesis via de novo pathway; 5-amino-1-(5-phospho-D-ribosyl)imidazole-4-carboxamide from 5-amino-1-(5-phospho-D-ribosyl)imidazole-4-carboxylate: step 1/2. The sequence is that of Phosphoribosylaminoimidazole-succinocarboxamide synthase, chloroplastic (PUR7) from Vigna aconitifolia (Moth bean).